Here is a 280-residue protein sequence, read N- to C-terminus: Probable cell division protein WhiA (280 aa).

Positions 247–279 (SLEQIANFFFTKYNIKISRSGIQHFSVNLKKLC) form a DNA-binding region, H-T-H motif.

This sequence belongs to the WhiA family.

In terms of biological role, involved in cell division and chromosome segregation. This Mycoplasma genitalium (strain ATCC 33530 / DSM 19775 / NCTC 10195 / G37) (Mycoplasmoides genitalium) protein is Probable cell division protein WhiA.